The chain runs to 880 residues: MSVFKKKDKSDDKKKKHDEETPQGTFQPASQSTSNTNLNSLASSVNNGASVGSTNGSTPNNSNGSTPTYNHNNSAEELEKQKKEEDEKRKKSELEAAAAVVAKKKEDEEKQRKEQVELERKRRDEEIRRTNAAAANAANKELNEQVEISSLEQMGKLDPSSTIHDMFSFFPNEVYNSYEKLQYFSRDLNTAVSHPEIVFVGPRSSGKSSLIEAFIGRALNIVGGGNIVGVGGSNANGCSKRVLYLQFTNNIDFEVPKVTIKKDNTIKEFDHDIIVSIEQLNENLAKRNQLTNDYIEEPIYVSIESRTTLNLTLIDSPGLLFDQSQAESNKIESIVSSLLRPSHRLIIAVESCSQDWKSMSMGQYLKKIDPELSRSTFVFTKFHHTVRGFSSTRDINKYLSGTVPDIKGFFVTLPNHQVRASYSEANRFQEKIYQAHKRDMHALEQLQYDKRYERTIGVAPLRRYILNIVWKSYQDTIPRILKHLRSKRQTAEATLNELQKQSSSLDSTKLRSIASNYTVTFLQITEKLLSGTSEGNPSANGQTLDEEKSQQGDCGEWVDAYKEAIYIDPEEWNIPYWSSKLYGGQQLERLMAEFKAVCDNSKISEVKMDDIATASGINKLNNIPNYAWAASDLTSLISRDTFVPLIEQLCERAMYIMKRLTDIADKVIDSRRKSRCIGSSPFGGNGLNNINSGGNNGININDRLSNTDMDSLDQYPFFTHHVKNLYYDFVHRAAKGCKEKCMDEFYSSRTIYWELTEHPDSSLPSIRNDHHETKTAVCQLATKLFDSIRQRITKNVLLKLYNFFLVPMQTDLWNEIQAQITCLSNEQLEQLFEVQATREQLKQEEKKQQQILEKYSQIDEQFLKAASLFCRPLSNPTPSA.

The disordered stretch occupies residues Met-1–Asp-124. A compositionally biased stretch (basic and acidic residues) spans Asp-8–Glu-20. Residues Pro-22–Gln-31 are compositionally biased toward polar residues. The segment covering Ser-32–Thr-68 has biased composition (low complexity). The stretch at Tyr-69–Glu-152 forms a coiled coil. Basic and acidic residues-rich tracts occupy residues Glu-77 to Leu-94 and Lys-103 to Asp-124. One can recognise a Dynamin-type G domain in the interval Ala-191–Pro-478. A G1 motif region spans residues Gly-201–Ser-208. Gly-201–Ser-208 is a binding site for GTP. The segment at Ile-227–Lys-240 is G2 motif. Positions Asp-315–Gly-318 are G3 motif. GTP contacts are provided by residues Asp-315–Leu-319 and Thr-380–His-383. The segment at Thr-380–His-383 is G4 motif. Positions Leu-413–His-416 are G5 motif. Residues Arg-479–Lys-509 are a coiled coil. The span at Thr-532–Thr-543 shows a compositional bias: polar residues. Residues Thr-532–Gln-551 form a disordered region. The stretch at Ser-824–Gln-861 forms a coiled coil.

Belongs to the TRAFAC class dynamin-like GTPase superfamily. Dynamin/Fzo/YdjA family.

It is found in the cytoplasm. The protein localises to the cleavage furrow. The catalysed reaction is GTP + H2O = GDP + phosphate + H(+). Its function is as follows. Involved in cytokinesis. May hydrolyze GTP. The protein is Dynamin-like protein A (dlpA) of Dictyostelium discoideum (Social amoeba).